We begin with the raw amino-acid sequence, 362 residues long: Phosphoserine aminotransferase (362 aa).

Positions 9 and 42 each coordinate L-glutamate. Residues 76–77 (GR), tryptophan 102, threonine 153, aspartate 174, and glutamine 197 contribute to the pyridoxal 5'-phosphate site. Lysine 198 is modified (N6-(pyridoxal phosphate)lysine). Pyridoxal 5'-phosphate is bound at residue 239-240 (NT).

Belongs to the class-V pyridoxal-phosphate-dependent aminotransferase family. SerC subfamily. In terms of assembly, homodimer. Requires pyridoxal 5'-phosphate as cofactor.

It is found in the cytoplasm. The enzyme catalyses O-phospho-L-serine + 2-oxoglutarate = 3-phosphooxypyruvate + L-glutamate. It carries out the reaction 4-(phosphooxy)-L-threonine + 2-oxoglutarate = (R)-3-hydroxy-2-oxo-4-phosphooxybutanoate + L-glutamate. It participates in amino-acid biosynthesis; L-serine biosynthesis; L-serine from 3-phospho-D-glycerate: step 2/3. Its pathway is cofactor biosynthesis; pyridoxine 5'-phosphate biosynthesis; pyridoxine 5'-phosphate from D-erythrose 4-phosphate: step 3/5. Catalyzes the reversible conversion of 3-phosphohydroxypyruvate to phosphoserine and of 3-hydroxy-2-oxo-4-phosphonooxybutanoate to phosphohydroxythreonine. The polypeptide is Phosphoserine aminotransferase (Shigella dysenteriae serotype 1 (strain Sd197)).